Here is a 396-residue protein sequence, read N- to C-terminus: NADH-quinone oxidoreductase subunit D (396 aa).

It belongs to the complex I 49 kDa subunit family. NDH-1 is composed of 14 different subunits. Subunits NuoB, C, D, E, F, and G constitute the peripheral sector of the complex.

The protein localises to the cell inner membrane. It catalyses the reaction a quinone + NADH + 5 H(+)(in) = a quinol + NAD(+) + 4 H(+)(out). In terms of biological role, NDH-1 shuttles electrons from NADH, via FMN and iron-sulfur (Fe-S) centers, to quinones in the respiratory chain. The immediate electron acceptor for the enzyme in this species is believed to be ubiquinone. Couples the redox reaction to proton translocation (for every two electrons transferred, four hydrogen ions are translocated across the cytoplasmic membrane), and thus conserves the redox energy in a proton gradient. This chain is NADH-quinone oxidoreductase subunit D, found in Bartonella quintana (strain Toulouse) (Rochalimaea quintana).